The primary structure comprises 472 residues: Glutamate--tRNA ligase (472 aa).

The short motif at 8 to 18 (PSPTGFLHIGS) is the 'HIGH' region element. Positions 239-243 (KLSKR) match the 'KMSKS' region motif. Lys242 contributes to the ATP binding site.

Belongs to the class-I aminoacyl-tRNA synthetase family. Glutamate--tRNA ligase type 1 subfamily. Monomer.

The protein localises to the cytoplasm. It carries out the reaction tRNA(Glu) + L-glutamate + ATP = L-glutamyl-tRNA(Glu) + AMP + diphosphate. Its function is as follows. Catalyzes the attachment of glutamate to tRNA(Glu) in a two-step reaction: glutamate is first activated by ATP to form Glu-AMP and then transferred to the acceptor end of tRNA(Glu). The chain is Glutamate--tRNA ligase from Solibacter usitatus (strain Ellin6076).